The chain runs to 327 residues: Probable cell division protein WhiA (327 aa).

A DNA-binding region (H-T-H motif) is located at residues 277–310 (EELGRLADPPMTKDAVAGRIRRLLSMADRKAKQD). Residues 304-327 (DRKAKQDGIPDTESAVTPDLLEDA) form a disordered region.

Belongs to the WhiA family.

Its function is as follows. Involved in cell division and chromosome segregation. The polypeptide is Probable cell division protein WhiA (Mycolicibacterium vanbaalenii (strain DSM 7251 / JCM 13017 / BCRC 16820 / KCTC 9966 / NRRL B-24157 / PYR-1) (Mycobacterium vanbaalenii)).